A 443-amino-acid chain; its full sequence is MREIVHIQGGQCGNQIGAKFWEVISDEHGIDPTGTYHGDSDLQLERINVYYNEATGGRYVPRAILMDLEPGTMDSVRAGPFGQLFRPDNFVFGQTGAGNNWAKGHYTEGAELIDSVLDVVRKEAEGCDCLQGFQITHSLGGGTGSGMGTLLISKVREEYPDRIMETFSVVPSPKVSDTVVEPYNATLSVHQLVENADECMVIDNEALYDICFRTLKLTTPTYGDLNHLVSAAMSGVTCCLRFPGQLNSDLRKLAVNLIPFPRLHFFMIGFAPLTSRGSQQYRALTVPELTQQMFDAKNMMCAADPRHGRYLTASALFRGRMSTKEVDEQMLNVQNKNSSYFVEWIPNNIKSSICDIPPKGLKMAVTFVGNSTAIQEMFKRVAEQFTAMFRRKAFLHWYTGEGMDEMEFTEAESNMNDLVSEYQQYQDATAEEEGEFEEEEGEN.

Residues Gln-11, Glu-69, Ser-138, Gly-142, Thr-143, Gly-144, Asn-204, and Asn-226 each coordinate GTP. Residue Glu-69 participates in Mg(2+) binding. Residues 424–443 (QYQDATAEEEGEFEEEEGEN) form a disordered region. Acidic residues predominate over residues 429–443 (TAEEEGEFEEEEGEN).

Belongs to the tubulin family. Dimer of alpha and beta chains. A typical microtubule is a hollow water-filled tube with an outer diameter of 25 nm and an inner diameter of 15 nM. Alpha-beta heterodimers associate head-to-tail to form protofilaments running lengthwise along the microtubule wall with the beta-tubulin subunit facing the microtubule plus end conferring a structural polarity. Microtubules usually have 13 protofilaments but different protofilament numbers can be found in some organisms and specialized cells. Requires Mg(2+) as cofactor. Some glutamate residues at the C-terminus are either polyglutamylated or polyglycylated. These 2 modifications occur exclusively on glutamate residues and result in either polyglutamate or polyglycine chains on the gamma-carboxyl group. Both modifications can coexist on the same protein on adjacent residues, and lowering polyglycylation levels increases polyglutamylation, and reciprocally. The precise function of such modifications is still unclear but they regulate the assembly and dynamics of axonemal microtubules.

Its subcellular location is the cytoplasm. It is found in the cytoskeleton. Tubulin is the major constituent of microtubules, a cylinder consisting of laterally associated linear protofilaments composed of alpha- and beta-tubulin heterodimers. Microtubules grow by the addition of GTP-tubulin dimers to the microtubule end, where a stabilizing cap forms. Below the cap, tubulin dimers are in GDP-bound state, owing to GTPase activity of alpha-tubulin. This chain is Tubulin beta chain (BTU1), found in Tetrahymena thermophila.